The chain runs to 446 residues: Phosphoglucosamine mutase (446 aa).

Serine 100 serves as the catalytic Phosphoserine intermediate. Residues serine 100, aspartate 241, aspartate 243, and aspartate 245 each coordinate Mg(2+). At serine 100 the chain carries Phosphoserine.

The protein belongs to the phosphohexose mutase family. The cofactor is Mg(2+). Activated by phosphorylation.

The enzyme catalyses alpha-D-glucosamine 1-phosphate = D-glucosamine 6-phosphate. Catalyzes the conversion of glucosamine-6-phosphate to glucosamine-1-phosphate. The chain is Phosphoglucosamine mutase from Methylobacterium nodulans (strain LMG 21967 / CNCM I-2342 / ORS 2060).